We begin with the raw amino-acid sequence, 92 residues long: Protein EMB-1 (92 aa).

Composition is skewed to basic and acidic residues over residues 1–16, 37–61, and 72–92; these read MASQ…RARQ, AEGR…EMGR, and GGER…RTKK. The segment at 1 to 92 is disordered; sequence MASQQEKKEL…IDESKFRTKK (92 aa).

This sequence belongs to the small hydrophilic plant seed protein family. In terms of tissue distribution, expressed in embryogenic cells, somatic embryos and seeds at the later stages of development. In the embryos, expressed in the procambium, the root and shoot meristem and the protoderm of the cotyledons. Not detected in the endosperm or the aleurone layer, in young leaves or roots.

It is found in the nucleus. The protein is Protein EMB-1 of Daucus carota (Wild carrot).